The following is a 245-amino-acid chain: Putative MSV199 domain-containing protein 146R (245 aa).

Residues 2 to 97 (RKGYIYVIEN…NTLHGKLKNL (96 aa)) enclose the GIY-YIG domain.

This Acheta domesticus (House cricket) protein is Putative MSV199 domain-containing protein 146R.